A 214-amino-acid chain; its full sequence is Cytochrome b (214 aa).

4 helical membrane passes run 31-51, 75-96, 111-131, and 176-196; these read FGSM…FLAF, WIMQ…YIHI, WVSG…GYVL, and FFAL…IHIL. Heme b contacts are provided by His81 and His95. Positions 180 and 194 each coordinate heme b. His199 serves as a coordination point for a ubiquinone.

This sequence belongs to the cytochrome b family. As to quaternary structure, the cytochrome bc1 complex contains 3 respiratory subunits (MT-CYB, CYC1 and UQCRFS1), 2 core proteins (UQCRC1 and UQCRC2) and probably 6 low-molecular weight proteins. Requires heme b as cofactor.

Its subcellular location is the mitochondrion inner membrane. In terms of biological role, component of the ubiquinol-cytochrome c reductase complex (complex III or cytochrome b-c1 complex) that is part of the mitochondrial respiratory chain. The b-c1 complex mediates electron transfer from ubiquinol to cytochrome c. Contributes to the generation of a proton gradient across the mitochondrial membrane that is then used for ATP synthesis. This chain is Cytochrome b (MT-CYB), found in Gloydius blomhoffii (Mamushi).